We begin with the raw amino-acid sequence, 190 residues long: Potassium-transporting ATPase KdpC subunit (190 aa).

The helical transmembrane segment at 10 to 30 threads the bilayer; the sequence is TFIFLLLITGGVYPLLTTVLG.

This sequence belongs to the KdpC family. The system is composed of three essential subunits: KdpA, KdpB and KdpC.

It is found in the cell inner membrane. Its function is as follows. Part of the high-affinity ATP-driven potassium transport (or Kdp) system, which catalyzes the hydrolysis of ATP coupled with the electrogenic transport of potassium into the cytoplasm. This subunit acts as a catalytic chaperone that increases the ATP-binding affinity of the ATP-hydrolyzing subunit KdpB by the formation of a transient KdpB/KdpC/ATP ternary complex. The protein is Potassium-transporting ATPase KdpC subunit of Escherichia coli O139:H28 (strain E24377A / ETEC).